The primary structure comprises 93 residues: Large ribosomal subunit protein uL23cz/uL23cy (93 aa).

It belongs to the universal ribosomal protein uL23 family. In terms of assembly, part of the 50S ribosomal subunit.

The protein localises to the plastid. It is found in the chloroplast. In terms of biological role, binds to 23S rRNA. In Nandina domestica (Heavenly bamboo), this protein is Large ribosomal subunit protein uL23cz/uL23cy (rpl23-A).